The sequence spans 498 residues: Putative antiporter subunit mnhD2 (498 aa).

14 helical membrane passes run 2-22 (LSNLLILPMLLPFLCALILVF), 32-52 (YLYLGTMTITTIISLMLLIYV), 78-98 (LSLIMVTTASFVITLIMAYGF), 108-128 (YHLPSFILFLSVGVIGSFLTS), 130-150 (LFNLYVMFEIMLLASFVLITL), 161-181 (IIYVVLNIIGSWLFLLGIGLL), 209-229 (ISLIFLVAFSAKAALVLFMWL), 240-260 (LAALFAALMTKVGAYALIRFF), 271-291 (IHPLLVTMAAITMVIGAIGVI), 308-328 (IGFIILGLGTNTFAGINGAIF), 330-350 (LVNDIVVKTLLFFIIGSLVYI), 368-388 (FFGVAFIIMIFAIGGVPPFSG), 403-423 (GNYIGLALMIITSLIAMYSLF), and 450-470 (GILSILVVVVIAIGIAAPVLL).

Belongs to the CPA3 antiporters (TC 2.A.63) subunit D family. As to quaternary structure, may form a heterooligomeric complex that consists of seven subunits: mnhA2, mnhB2, mnhC2, mnhD2, mnhE2, mnhF2 and mnhG2.

Its subcellular location is the cell membrane. The chain is Putative antiporter subunit mnhD2 (mnhD2) from Staphylococcus aureus (strain MRSA252).